A 496-amino-acid polypeptide reads, in one-letter code: Probable cytosol aminopeptidase (496 aa).

The Mn(2+) site is built by Lys-266 and Asp-271. The active site involves Lys-278. Asp-289, Asp-348, and Glu-350 together coordinate Mn(2+). Arg-352 is an active-site residue.

It belongs to the peptidase M17 family. Mn(2+) is required as a cofactor.

It is found in the cytoplasm. The enzyme catalyses Release of an N-terminal amino acid, Xaa-|-Yaa-, in which Xaa is preferably Leu, but may be other amino acids including Pro although not Arg or Lys, and Yaa may be Pro. Amino acid amides and methyl esters are also readily hydrolyzed, but rates on arylamides are exceedingly low.. It catalyses the reaction Release of an N-terminal amino acid, preferentially leucine, but not glutamic or aspartic acids.. Its function is as follows. Presumably involved in the processing and regular turnover of intracellular proteins. Catalyzes the removal of unsubstituted N-terminal amino acids from various peptides. This chain is Probable cytosol aminopeptidase, found in Pseudomonas syringae pv. tomato (strain ATCC BAA-871 / DC3000).